A 301-amino-acid chain; its full sequence is Probable protein phosphatase 2C 4 (301 aa).

Residues 1–18 are compositionally biased toward polar residues; it reads MGPYLSQPNKNKTTTSGE. Residues 1–20 are disordered; sequence MGPYLSQPNKNKTTTSGEGK. The PPM-type phosphatase domain occupies 23–298; the sequence is IFAASEMQGW…DNMTTLIIYL (276 aa). Mn(2+) is bound by residues aspartate 57, glycine 58, aspartate 237, and aspartate 289.

This sequence belongs to the PP2C family. Mg(2+) serves as cofactor. Mn(2+) is required as a cofactor.

The protein resides in the membrane. It carries out the reaction O-phospho-L-seryl-[protein] + H2O = L-seryl-[protein] + phosphate. The catalysed reaction is O-phospho-L-threonyl-[protein] + H2O = L-threonyl-[protein] + phosphate. Enzyme with a broad specificity. This chain is Probable protein phosphatase 2C 4, found in Paramecium tetraurelia.